Here is a 787-residue protein sequence, read N- to C-terminus: MKAVETRILELRAELDQHNYRYHVLDEPSIPDVEYDRLFHELKALEAENPHLVTPDSPTQRVGSAALSAFTQVRHEMPMLSLGNAFEENDMLEFDRRVTEGLDLPAGDLFGEGGKVQYSCEPKLDGLAVSLLYRDGALVRGATRGDGTTGEDISVNVRTVRNIPLKLQGKGWPDVLEVRGEVFMSKAGFERLNASQLEIGGKTFANPRNAAAGSLRQLDSKITANRPLEFCCYGLGQTSAEIADTHIGVLEALKKWGMPVSRELKLANGVEECLAYYRDIGERRLTLTYEIDGVVFKVNNLAAQRELGFRAREPRWAIAHKFPAMEELTELLDVEFQVGRTGAVTPVARLKPVKVAGVMVANATLHNMDEVARLGLMIGDTVIIRRAGDVIPQVVQVVAERRPENARAVQVPQTCPVCGSHVERTQLIKRSKGKETVTEGAVYRCVGRLACGAQLKQAIIHYVSRRAMDIEGLGDKTIEQLVDEKLIGSPADLYKLKYEQIIDLEGFAEISSNKLLKAIADSRQPTLARFIYALGIPDVGEETAKVLARSLASLERVKQALPEVLTYLPDVGLEVAYEIRSFFEDEHNRSVIDALLGECGLQLQDQGELGAEFAASTTLEGLIDKLHIPSVGPGAAQKLADRFGTLEAIISADWLDMRQALPEKQAKSVRDFFDDSANAERARAIEAQLKDFGMHWRSEKKTVEGLPLAGQTWVLTGSLERMSRDVAKEKLESLGAKVSGSVSAKTHTVVAGPGAGSKLTKANELGLTVLDEDALLKRLIELGVAVD.

NAD(+) contacts are provided by residues 32–36, 81–82, and Glu121; these read DVEYD and SL. The active-site N6-AMP-lysine intermediate is the Lys123. NAD(+) contacts are provided by Arg144, Glu181, Lys297, and Lys321. The Zn(2+) site is built by Cys415, Cys418, Cys445, and Cys451. Residues 703–787 enclose the BRCT domain; the sequence is VEGLPLAGQT…RLIELGVAVD (85 aa).

Belongs to the NAD-dependent DNA ligase family. LigA subfamily. Mg(2+) serves as cofactor. Requires Mn(2+) as cofactor.

It carries out the reaction NAD(+) + (deoxyribonucleotide)n-3'-hydroxyl + 5'-phospho-(deoxyribonucleotide)m = (deoxyribonucleotide)n+m + AMP + beta-nicotinamide D-nucleotide.. In terms of biological role, DNA ligase that catalyzes the formation of phosphodiester linkages between 5'-phosphoryl and 3'-hydroxyl groups in double-stranded DNA using NAD as a coenzyme and as the energy source for the reaction. It is essential for DNA replication and repair of damaged DNA. This Pseudomonas syringae pv. syringae (strain B728a) protein is DNA ligase.